The primary structure comprises 499 residues: Cysteine--tRNA ligase (499 aa).

Cys29 is a Zn(2+) binding site. The short motif at 31 to 41 (VTVYDLCHLGH) is the 'HIGH' region element. 3 residues coordinate Zn(2+): Cys213, His238, and Glu242. A 'KMSKS' region motif is present at residues 270 to 274 (KMSKS). Residue Lys273 coordinates ATP.

This sequence belongs to the class-I aminoacyl-tRNA synthetase family. Monomer. Requires Zn(2+) as cofactor.

It localises to the cytoplasm. It catalyses the reaction tRNA(Cys) + L-cysteine + ATP = L-cysteinyl-tRNA(Cys) + AMP + diphosphate. The polypeptide is Cysteine--tRNA ligase (Prochlorococcus marinus (strain MIT 9303)).